Consider the following 443-residue polypeptide: Ribulose bisphosphate carboxylase large chain (443 aa).

Residue K3 is modified to N6,N6,N6-trimethyllysine. Residues N112 and T162 each coordinate substrate. K164 acts as the Proton acceptor in catalysis. K166 is a binding site for substrate. Positions 190, 192, and 193 each coordinate Mg(2+). K190 is subject to N6-carboxylysine. The active-site Proton acceptor is H283. Residues R284, H316, and S368 each contribute to the substrate site.

The protein belongs to the RuBisCO large chain family. Type I subfamily. In terms of assembly, heterohexadecamer of 8 large chains and 8 small chains; disulfide-linked. The disulfide link is formed within the large subunit homodimers. Mg(2+) serves as cofactor. The disulfide bond which can form in the large chain dimeric partners within the hexadecamer appears to be associated with oxidative stress and protein turnover.

The protein localises to the plastid. It localises to the chloroplast. It carries out the reaction 2 (2R)-3-phosphoglycerate + 2 H(+) = D-ribulose 1,5-bisphosphate + CO2 + H2O. The catalysed reaction is D-ribulose 1,5-bisphosphate + O2 = 2-phosphoglycolate + (2R)-3-phosphoglycerate + 2 H(+). Functionally, ruBisCO catalyzes two reactions: the carboxylation of D-ribulose 1,5-bisphosphate, the primary event in carbon dioxide fixation, as well as the oxidative fragmentation of the pentose substrate in the photorespiration process. Both reactions occur simultaneously and in competition at the same active site. The sequence is that of Ribulose bisphosphate carboxylase large chain from Iris germanica (Bearded iris).